A 362-amino-acid polypeptide reads, in one-letter code: Probable non-structural 41.0 kDa protein (362 aa).

The interval 341-362 (MNAAAPSAPTPTELPVFSPPSS) is disordered.

This is Probable non-structural 41.0 kDa protein (S6) from Maize rough dwarf virus (MRDV).